We begin with the raw amino-acid sequence, 401 residues long: Mu-type opioid receptor (401 aa).

Over 1–69 (MDSSAVPANA…CPPTGSPSMI (69 aa)) the chain is Extracellular. Asparagine 9, asparagine 12, asparagine 34, asparagine 41, and asparagine 49 each carry an N-linked (GlcNAc...) asparagine glycan. The helical transmembrane segment at 70-94 (TAITIMALYSIVCVVGLFGNFLVMY) threads the bilayer. The Cytoplasmic portion of the chain corresponds to 95-107 (VIVRYTKMKTATN). The chain crosses the membrane as a helical span at residues 108–132 (IYIFNLALADALATSTLPFQSVNYL). Residues 133 to 143 (MGTWPFGTILC) lie on the Extracellular side of the membrane. A disulfide bridge connects residues cysteine 143 and cysteine 220. Residues 144–166 (KIVISIDYYNMFTSIFTLCTMSV) traverse the membrane as a helical segment. At 167-186 (DRYIAVCHPVKALDFRTPRN) the chain is on the cytoplasmic side. A Phosphotyrosine modification is found at tyrosine 169. A helical membrane pass occupies residues 187–208 (AKIINVCNWILSSAIGLPVMFM). Residues 209–231 (ATTKYRHGSIDCTLTFSHPTWYW) lie on the Extracellular side of the membrane. Residues 232–256 (ENLLKICVFIFAFIMPVLIITVCYG) form a helical membrane-spanning segment. The Cytoplasmic segment spans residues 257-280 (LMILRLKSVRMLSGSKEKDRNLRR). Residues 281-307 (ITRMVLVVVAVFIVCWTPIHIYVIIKA) form a helical membrane-spanning segment. Residues 308 to 315 (LVTIPETT) are Extracellular-facing. The chain crosses the membrane as a helical span at residues 316–339 (FQTVSWHFCIALGYTNSCLNPVLY). The short motif at 335 to 339 (NPVLY) is the NPxxY; plays a role in stabilizing the activated conformation of the receptor element. Over 340–401 (AFLDENFKRC…NLEAETAPLP (62 aa)) the chain is Cytoplasmic. Cysteine 354 carries the S-palmitoyl cysteine lipid modification. Residues 365–388 (NSTRIRQNTRDHPSTANTVDRTNH) are disordered. Phosphoserine is present on serine 366. Threonine 373 carries the post-translational modification Phosphothreonine. Serine 378 carries the phosphoserine modification. Phosphothreonine is present on threonine 397.

This sequence belongs to the G-protein coupled receptor 1 family. As to quaternary structure, forms homooligomers and heterooligomers with other GPCRs, such as OPRD1, OPRK1, OPRL1, NPFFR2, ADRA2A, SSTR2, CNR1 and CCR5 (probably in dimeric forms). Interacts with heterotrimeric G proteins; interaction with a heterotrimeric complex containing GNAI1, GNB1 and GNG2 stabilizes the active conformation of the receptor and increases its affinity for endomorphin-2, the synthetic opioid peptide DAMGO and for morphinan agonists. Interacts with PPL; the interaction disrupts agonist-mediated G-protein activation. Interacts (via C-terminus) with DNAJB4 (via C-terminus). Interacts with calmodulin; the interaction inhibits the constitutive activity of OPRM1; it abolishes basal and attenuates agonist-stimulated G-protein coupling. Interacts with FLNA, PLD2, RANBP9 and WLS and GPM6A. Interacts with RTP4. Interacts with SYP and GNAS. Interacts with RGS9, RGS17, RGS20, RGS4, PPP1R9B and HINT1. Post-translationally, phosphorylated. Differentially phosphorylated in basal and agonist-induced conditions. Agonist-mediated phosphorylation modulates receptor internalization. Phosphorylated by GRK2 in a agonist-dependent manner. Phosphorylation at Tyr-169 requires receptor activation, is dependent on non-receptor protein tyrosine kinase Src and results in a decrease in agonist efficacy by reducing G-protein coupling efficiency. Phosphorylated on tyrosine residues; the phosphorylation is involved in agonist-induced G-protein-independent receptor down-regulation. Phosphorylation at Ser-378 is involved in G-protein-dependent but not beta-arrestin-dependent activation of the ERK pathway. Ubiquitinated. A basal ubiquitination seems not to be related to degradation. Ubiquitination is increased upon formation of OPRM1:OPRD1 oligomers leading to proteasomal degradation; the ubiquitination is diminished by RTP4.

The protein localises to the cell membrane. It is found in the cell projection. Its subcellular location is the axon. The protein resides in the perikaryon. It localises to the dendrite. The protein localises to the endosome. In terms of biological role, receptor for endogenous opioids such as beta-endorphin and endomorphin. Receptor for natural and synthetic opioids including morphine, heroin, DAMGO, fentanyl, etorphine, buprenorphin and methadone. Also activated by enkephalin peptides, such as Met-enkephalin or Met-enkephalin-Arg-Phe, with higher affinity for Met-enkephalin-Arg-Phe. Agonist binding to the receptor induces coupling to an inactive GDP-bound heterotrimeric G-protein complex and subsequent exchange of GDP for GTP in the G-protein alpha subunit leading to dissociation of the G-protein complex with the free GTP-bound G-protein alpha and the G-protein beta-gamma dimer activating downstream cellular effectors. The agonist- and cell type-specific activity is predominantly coupled to pertussis toxin-sensitive G(i) and G(o) G alpha proteins, GNAI1, GNAI2, GNAI3 and GNAO1, and to a lesser extent to pertussis toxin-insensitive G alpha proteins GNAZ and GNA15. They mediate an array of downstream cellular responses, including inhibition of adenylate cyclase activity and both N-type and L-type calcium channels, activation of inward rectifying potassium channels, mitogen-activated protein kinase (MAPK), phospholipase C (PLC), phosphoinositide/protein kinase (PKC), phosphoinositide 3-kinase (PI3K) and regulation of NF-kappa-B. Also couples to adenylate cyclase stimulatory G alpha proteins. The selective temporal coupling to G-proteins and subsequent signaling can be regulated by RGSZ proteins, such as RGS9, RGS17 and RGS4. Phosphorylation by members of the GPRK subfamily of Ser/Thr protein kinases and association with beta-arrestins is involved in short-term receptor desensitization. Beta-arrestins associate with the GPRK-phosphorylated receptor and uncouple it from the G-protein thus terminating signal transduction. The phosphorylated receptor is internalized through endocytosis via clathrin-coated pits which involves beta-arrestins. The activation of the ERK pathway occurs either in a G-protein-dependent or a beta-arrestin-dependent manner and is regulated by agonist-specific receptor phosphorylation. Acts as a class A G-protein coupled receptor (GPCR) which dissociates from beta-arrestin at or near the plasma membrane and undergoes rapid recycling. Receptor down-regulation pathways are varying with the agonist and occur dependent or independent of G-protein coupling. Endogenous ligands induce rapid desensitization, endocytosis and recycling. Heterooligomerization with other GPCRs can modulate agonist binding, signaling and trafficking properties. Involved in neurogenesis. The chain is Mu-type opioid receptor (OPRM1) from Pan troglodytes (Chimpanzee).